We begin with the raw amino-acid sequence, 427 residues long: Terminal nucleotidyltransferase 5B (427 aa).

The interval 1–49 (MMPSESGAESLEQPAAQVGTGAASAVATAGAAGGGPDPEASSASLGRHQ) is disordered. Low complexity predominate over residues 15-30 (AAQVGTGAASAVATAG).

Belongs to the TENT family.

The protein localises to the cytoplasm. The protein resides in the nucleus. The enzyme catalyses RNA(n) + ATP = RNA(n)-3'-adenine ribonucleotide + diphosphate. Catalyzes the transfer of one adenosine molecule from an ATP to an mRNA poly(A) tail bearing a 3'-OH terminal group in an ATP hydrolysis-dependent manner. May be involved in maintaining the translation efficiency of at least some genes through preventing degradation of their mRNAs. Prefers RNA molecules that are adenosine-rich close to 3'-end. In addition, may inhibit cell proliferation and cell cycle progression through ubiquitination of beta-catenin/CTNNB1. This is Terminal nucleotidyltransferase 5B from Mus musculus (Mouse).